The following is a 182-amino-acid chain: UPF0316 protein BCQ_3166 (182 aa).

A run of 3 helical transmembrane segments spans residues leucine 6 to valine 26, serine 32 to phenylalanine 52, and tryptophan 58 to isoleucine 78.

It belongs to the UPF0316 family.

The protein resides in the cell membrane. This Bacillus cereus (strain Q1) protein is UPF0316 protein BCQ_3166.